The sequence spans 873 residues: Alanine--tRNA ligase (873 aa).

Zn(2+)-binding residues include His559, His563, Cys661, and His665.

It belongs to the class-II aminoacyl-tRNA synthetase family. In terms of assembly, homotetramer. The cofactor is Zn(2+).

It is found in the cytoplasm. It catalyses the reaction tRNA(Ala) + L-alanine + ATP = L-alanyl-tRNA(Ala) + AMP + diphosphate. Catalyzes the attachment of alanine to tRNA(Ala) in a two-step reaction: alanine is first activated by ATP to form Ala-AMP and then transferred to the acceptor end of tRNA(Ala). Also edits incorrectly charged Ser-tRNA(Ala) and Gly-tRNA(Ala) via its editing domain. This is Alanine--tRNA ligase from Wigglesworthia glossinidia brevipalpis.